Here is a 284-residue protein sequence, read N- to C-terminus: uncharacterized protein (284 aa).

The span at 1 to 10 (MSNSVTNFEM) shows a compositional bias: polar residues. The tract at residues 1–28 (MSNSVTNFEMSSVLPGKKPCQGKNNESQ) is disordered.

This is an uncharacterized protein from Escherichia coli (strain K12).